A 513-amino-acid chain; its full sequence is 5-aminolevulinate synthase, erythroid-specific, mitochondrial (513 aa).

Residues 1-18 constitute a mitochondrion transit peptide; the sequence is MAAFLRCPLLARHPPLAR. Succinyl-CoA is bound at residue Arg98. Pyridoxal 5'-phosphate is bound by residues Cys190 and Phe191. Succinyl-CoA-binding residues include Ser212 and Lys231. Residues Ser264, His292, and Thr320 each contribute to the pyridoxal 5'-phosphate site. The active site involves Lys323. Lys323 carries the N6-(pyridoxal phosphate)lysine modification. Pyridoxal 5'-phosphate contacts are provided by Thr352 and Thr353. Succinyl-CoA is bound at residue Thr437.

It belongs to the class-II pyridoxal-phosphate-dependent aminotransferase family. In terms of assembly, homodimer. It depends on pyridoxal 5'-phosphate as a cofactor. In terms of tissue distribution, erythroid-specific.

It localises to the mitochondrion inner membrane. It catalyses the reaction succinyl-CoA + glycine + H(+) = 5-aminolevulinate + CO2 + CoA. Its pathway is porphyrin-containing compound metabolism; protoporphyrin-IX biosynthesis; 5-aminolevulinate from glycine: step 1/1. Its function is as follows. Catalyzes the pyridoxal 5'-phosphate (PLP)-dependent condensation of succinyl-CoA and glycine to form aminolevulinic acid (ALA), with CoA and CO2 as by-products. Contributes significantly to heme formation during erythropoiesis. In Gallus gallus (Chicken), this protein is 5-aminolevulinate synthase, erythroid-specific, mitochondrial (ALAS2).